The sequence spans 338 residues: Glyceraldehyde-3-phosphate dehydrogenase 2 (338 aa).

NAD(+) is bound by residues 13 to 14 (RI), aspartate 35, and arginine 80. D-glyceraldehyde 3-phosphate contacts are provided by residues 151-153 (SCT), threonine 182, 211-212 (TG), and arginine 234. The active-site Nucleophile is the cysteine 152. An NAD(+)-binding site is contributed by asparagine 316.

This sequence belongs to the glyceraldehyde-3-phosphate dehydrogenase family. In terms of assembly, homotetramer.

Its subcellular location is the cytoplasm. It carries out the reaction D-glyceraldehyde 3-phosphate + phosphate + NAD(+) = (2R)-3-phospho-glyceroyl phosphate + NADH + H(+). The protein operates within carbohydrate degradation; glycolysis; pyruvate from D-glyceraldehyde 3-phosphate: step 1/5. Inhibited by koningic acid through the interaction of cysteine residues with koningic acid even at very low concentrations. The protein is Glyceraldehyde-3-phosphate dehydrogenase 2 (gpd2) of Trichoderma koningii (Hypocrea koningii).